The chain runs to 521 residues: GMP synthase [glutamine-hydrolyzing] (521 aa).

The 196-residue stretch at 8-203 (KILILDFGAQ…VVDICGCQTL (196 aa)) folds into the Glutamine amidotransferase type-1 domain. Catalysis depends on C85, which acts as the Nucleophile. Catalysis depends on residues H177 and E179. One can recognise a GMPS ATP-PPase domain in the interval 204–396 (WTAANIIDDQ…LGLPRTMVYR (193 aa)). ATP is bound at residue 231–237 (SGGVDSS).

Homodimer.

It catalyses the reaction XMP + L-glutamine + ATP + H2O = GMP + L-glutamate + AMP + diphosphate + 2 H(+). Its pathway is purine metabolism; GMP biosynthesis; GMP from XMP (L-Gln route): step 1/1. In terms of biological role, catalyzes the synthesis of GMP from XMP. This chain is GMP synthase [glutamine-hydrolyzing], found in Xanthomonas oryzae pv. oryzae (strain PXO99A).